The chain runs to 223 residues: uncharacterized protein (223 aa).

Residues 40–70 are disordered; sequence GSKRLKPAKFGTEGKERVEQRTERQRTGSSK. Positions 51–70 are enriched in basic and acidic residues; it reads TEGKERVEQRTERQRTGSSK.

This is an uncharacterized protein from Homo sapiens (Human).